The primary structure comprises 383 residues: Processive diacylglycerol beta-glucosyltransferase (383 aa).

The protein belongs to the glycosyltransferase 28 family. UgtP subfamily.

It is found in the cell membrane. The enzyme catalyses a 1,2-diacyl-3-O-(beta-D-glucopyranosyl)-sn-glycerol + UDP-alpha-D-glucose = a 1,2-diacyl-3-O-(beta-D-Glc-(1-&gt;6)-beta-D-Glc)-sn-glycerol + UDP + H(+). It carries out the reaction a 1,2-diacyl-3-O-(beta-D-Glc-(1-&gt;6)-beta-D-Glc)-sn-glycerol + UDP-alpha-D-glucose = a 1,2-diacyl-3-O-(beta-D-Glc-(1-&gt;6)-beta-D-Glc-(1-&gt;6)-beta-D-Glc)-sn-glycerol + UDP + H(+). The catalysed reaction is a 1,2-diacyl-sn-glycerol + UDP-alpha-D-glucose = a 1,2-diacyl-3-O-(beta-D-glucopyranosyl)-sn-glycerol + UDP + H(+). Its pathway is glycolipid metabolism; diglucosyl-diacylglycerol biosynthesis. Functionally, processive glucosyltransferase involved in the biosynthesis of both the bilayer- and non-bilayer-forming membrane glucolipids. Is able to successively transfer up to three glucosyl residues to diacylglycerol (DAG), thereby catalyzing the formation of beta-monoglucosyl-DAG (3-O-(beta-D-glucopyranosyl)-1,2-diacyl-sn-glycerol), beta-diglucosyl-DAG (3-O-(beta-D-glucopyranosyl-beta-(1-&gt;6)-D-glucopyranosyl)-1,2-diacyl-sn-glycerol) and beta-triglucosyl-DAG (3-O-(beta-D-glucopyranosyl-beta-(1-&gt;6)-D-glucopyranosyl-beta-(1-&gt;6)-D-glucopyranosyl)-1,2-diacyl-sn-glycerol). Beta-diglucosyl-DAG is the predominant glycolipid found in Bacillales and is also used as a membrane anchor for lipoteichoic acid (LTA). The sequence is that of Processive diacylglycerol beta-glucosyltransferase from Bacillus pumilus (strain SAFR-032).